The primary structure comprises 309 residues: Virulence regulon transcriptional activator VirB (309 aa).

The H-T-H motif DNA-binding region spans 152–171 (KDIAKKENLSRAKVTRAFQA).

This sequence belongs to the ParB family.

Functionally, transcription activator for the invasion antigens IpaB, IpaC and IpaD. VirB is itself regulated by VirF. The chain is Virulence regulon transcriptional activator VirB (virB) from Shigella flexneri.